Here is a 657-residue protein sequence, read N- to C-terminus: Receptor-type tyrosine-protein phosphatase R (657 aa).

A signal peptide spans 1–21 (MRRAVCFPALCLLLNLHAAGC). Topologically, residues 22-227 (FSGNNDHFLA…EADKIWSKEG (206 aa)) are extracellular. The O-linked (Xyl...) (chondroitin sulfate) serine glycan is linked to S23. Residue N129 is glycosylated (N-linked (GlcNAc...) asparagine). Residues 228–248 (FYAVVIFLSIFVIIVTCLMIL) traverse the membrane as a helical segment. Residues 249–657 (YRLKERFQLS…ESRLSAETVQ (409 aa)) lie on the Cytoplasmic side of the membrane. S272 carries the phosphoserine modification. Residue S339 is modified to Phosphoserine; by PKA. The Tyrosine-protein phosphatase domain occupies 393–647 (LQSEFMEIPM…EFVHHALCLY (255 aa)). Substrate contacts are provided by residues D554, 588–594 (CSAGIGR), and Q632. The Phosphocysteine intermediate role is filled by C588.

The protein belongs to the protein-tyrosine phosphatase family. Receptor class 7 subfamily. As to quaternary structure, interacts with MAPKs. As to expression, detected in cerebrospinal fluid (at protein level). Expressed in brain, placenta, small intestine, stomach, uterus and weakly in the prostate. Isoform alpha has been observed only in the brain. Isoform gamma is expressed in brain, placenta and uterus. Isoform delta is expressed in brain, kidney, placenta, prostate, small intestine and uterus.

It is found in the secreted. The protein localises to the cell membrane. The protein resides in the cytoplasm. Its subcellular location is the perinuclear region. It carries out the reaction O-phospho-L-tyrosyl-[protein] + H2O = L-tyrosyl-[protein] + phosphate. Functionally, sequesters mitogen-activated protein kinases (MAPKs) such as MAPK1, MAPK3 and MAPK14 in the cytoplasm in an inactive form. The MAPKs bind to a dephosphorylated kinase interacting motif, phosphorylation of which by the protein kinase A complex releases the MAPKs for activation and translocation into the nucleus. The protein is Receptor-type tyrosine-protein phosphatase R (PTPRR) of Homo sapiens (Human).